A 287-amino-acid chain; its full sequence is Spore wall protein 7 (287 aa).

A signal peptide spans 1-19 (MIKGLIYLFLFRCLEGRLA).

It belongs to the SWP7 family. As to quaternary structure, interacts with SWP9.

It is found in the cytoplasm. Its subcellular location is the spore wall. It localises to the spore polar tube. Its function is as follows. Involved in adherence of spores to the host cell surface and in infection efficiency. The sequence is that of Spore wall protein 7 (SWP7) from Nosema bombycis (strain CQ1 / CVCC 102059) (Microsporidian parasite).